The sequence spans 438 residues: Terminase, large subunit (438 aa).

The Walker A motif signature appears at 62-68 (SRRVGKS). The Walker B motif signature appears at 150-155 (FIIFDE). The active-site For ATPase activity is the glutamate 155. Aspartate 286, aspartate 342, and aspartate 418 together coordinate Mg(2+).

This sequence belongs to the Tequatrovirus large terminase family. Interacts with the terminase small subunit; the active complex is probably heterooligomeric. Interacts with the portal protein. Mg(2+) is required as a cofactor.

In terms of biological role, the terminase large subunit acts as an ATP driven molecular motor necessary for viral DNA translocation into empty capsids and as an endonuclease that cuts the viral genome to initiate and to end a packaging reaction The terminase lies at a unique vertex of the procapsid and is composed of two subunits, a small terminase subunit involved in viral DNA recognition (packaging sequence), and a large terminase subunit possessing endonucleolytic and ATPase activities. Both terminase subunits heterooligomerize and are docked on the portal protein to form the packaging machine. The terminase large subunit exhibits endonuclease activity and cleaves the viral genome concatemer. Direct long terminal repeats at each end of the genome are duplicated in concert with packaging. Once the capsid is packaged with the DNA, the terminase complex is substituted by the tail. The sequence is that of Terminase, large subunit from Escherichia phage T5 (Enterobacteria phage T5).